A 505-amino-acid chain; its full sequence is Deoxyguanosinetriphosphate triphosphohydrolase (505 aa).

An HD domain is found at 66–273 (RLTHSMEVQQ…MEAADDISYC (208 aa)).

The protein belongs to the dGTPase family. Type 1 subfamily. As to quaternary structure, homotetramer. It depends on Mg(2+) as a cofactor.

It carries out the reaction dGTP + H2O = 2'-deoxyguanosine + triphosphate + H(+). Its function is as follows. dGTPase preferentially hydrolyzes dGTP over the other canonical NTPs. In Shigella flexneri, this protein is Deoxyguanosinetriphosphate triphosphohydrolase.